The primary structure comprises 199 residues: Thymidylate kinase (199 aa).

7–14 (GIDGSGKT) provides a ligand contact to ATP.

Belongs to the thymidylate kinase family.

It carries out the reaction dTMP + ATP = dTDP + ADP. Phosphorylation of dTMP to form dTDP in both de novo and salvage pathways of dTTP synthesis. The sequence is that of Thymidylate kinase from Tropheryma whipplei (strain Twist) (Whipple's bacillus).